Consider the following 957-residue polypeptide: Glycine dehydrogenase (decarboxylating) (957 aa).

K708 carries the N6-(pyridoxal phosphate)lysine modification.

It belongs to the GcvP family. As to quaternary structure, the glycine cleavage system is composed of four proteins: P, T, L and H. Pyridoxal 5'-phosphate serves as cofactor.

The enzyme catalyses N(6)-[(R)-lipoyl]-L-lysyl-[glycine-cleavage complex H protein] + glycine + H(+) = N(6)-[(R)-S(8)-aminomethyldihydrolipoyl]-L-lysyl-[glycine-cleavage complex H protein] + CO2. Functionally, the glycine cleavage system catalyzes the degradation of glycine. The P protein binds the alpha-amino group of glycine through its pyridoxal phosphate cofactor; CO(2) is released and the remaining methylamine moiety is then transferred to the lipoamide cofactor of the H protein. This chain is Glycine dehydrogenase (decarboxylating), found in Pectobacterium atrosepticum (strain SCRI 1043 / ATCC BAA-672) (Erwinia carotovora subsp. atroseptica).